The sequence spans 846 residues: Translation initiation factor IF-2 (846 aa).

Residues 94-263 form a disordered region; it reads QRSPEEIQAE…HGFQNPTGPV (170 aa). Over residues 96–135 the composition is skewed to basic and acidic residues; sequence SPEEIQAEQKRELDERRAAENAARDKVEAEVRQRNEEQAR. Composition is skewed to low complexity over residues 136 to 148 and 158 to 176; these read RQAA…APAP and AAPV…ASED. Composition is skewed to basic and acidic residues over residues 177-206 and 230-239; these read AAAR…RGEA and TTDEESDGAR. Residues 240–253 are compositionally biased toward basic residues; the sequence is RGRGGKSKLKKRNQ. The tr-type G domain maps to 346 to 513; the sequence is SRAPVVTVMG…AVLLQAEILE (168 aa). Positions 355–362 are G1; it reads GHVDHGKT. 355–362 contacts GTP; sequence GHVDHGKT. The G2 stretch occupies residues 380–384; that stretch reads GITQH. Residues 401–404 form a G3 region; it reads DTPG. GTP is bound by residues 401 to 405 and 455 to 458; these read DTPGH and NKID. Positions 455 to 458 are G4; that stretch reads NKID. The tract at residues 491-493 is G5; that stretch reads SAK.

This sequence belongs to the TRAFAC class translation factor GTPase superfamily. Classic translation factor GTPase family. IF-2 subfamily.

The protein resides in the cytoplasm. Functionally, one of the essential components for the initiation of protein synthesis. Protects formylmethionyl-tRNA from spontaneous hydrolysis and promotes its binding to the 30S ribosomal subunits. Also involved in the hydrolysis of GTP during the formation of the 70S ribosomal complex. This chain is Translation initiation factor IF-2, found in Pseudomonas putida (strain ATCC 47054 / DSM 6125 / CFBP 8728 / NCIMB 11950 / KT2440).